Reading from the N-terminus, the 647-residue chain is Microtubule-associated protein 9 (647 aa).

Ser2 is modified (N-acetylserine). Tyr12 is subject to Phosphotyrosine. Disordered regions lie at residues 127 to 323, 344 to 421, 491 to 514, 530 to 553, 580 to 600, and 613 to 647; these read KSFS…ELIM, SATA…PDRA, KRLEEKNKKKTEEENAARKGEALQ, KNRKEREYERAKKQKEEETVAEKK, NEKRKEELKRAEKKDKDKQAI, and QERIERKQKKRHSFLESEALPPWSPPSRTVFAKVF. Positions 133-145 are enriched in basic and acidic residues; it reads QNKDEEFEKDKIK. A compositionally biased stretch (polar residues) spans 155 to 166; sequence IKSTSSAENNSL. Positions 174 to 186 are enriched in basic residues; sequence PSPRPRSMLKKKS. The stretch at 184 to 210 forms a coiled coil; the sequence is KKSHMEEKDGLEDKETALSEELELHSA. The segment covering 187 to 200 has biased composition (basic and acidic residues); it reads HMEEKDGLEDKETA. Composition is skewed to polar residues over residues 210 to 219 and 239 to 249; these read APSSLPTPNG and CLTSLASSSLK. The span at 268-287 shows a compositional bias: basic and acidic residues; sequence DPNEEITENHNSLKSDENKE. Positions 298–328 form a coiled coil; the sequence is AVEKSKESQVTADDLEEEKAKAELIMDDDRT. Over residues 365–374 the composition is skewed to low complexity; that stretch reads NNRASSASAR. Residues 443 to 628 adopt a coiled-coil conformation; sequence MHRIKRIESE…KQKKRHSFLE (186 aa).

In terms of assembly, binds to purified microtubules via its C-terminus.

Its subcellular location is the cytoplasm. The protein localises to the cytoskeleton. It localises to the spindle. Its function is as follows. Involved in organization of the bipolar mitotic spindle. Required for bipolar spindle assembly, mitosis progression and cytokinesis. May act by stabilizing interphase microtubules. The sequence is that of Microtubule-associated protein 9 (MAP9) from Homo sapiens (Human).